The following is a 179-amino-acid chain: Large ribosomal subunit protein uL5 (179 aa).

Belongs to the universal ribosomal protein uL5 family. In terms of assembly, part of the 50S ribosomal subunit; part of the 5S rRNA/L5/L18/L25 subcomplex. Contacts the 5S rRNA and the P site tRNA. Forms a bridge to the 30S subunit in the 70S ribosome.

Functionally, this is one of the proteins that bind and probably mediate the attachment of the 5S RNA into the large ribosomal subunit, where it forms part of the central protuberance. In the 70S ribosome it contacts protein S13 of the 30S subunit (bridge B1b), connecting the 2 subunits; this bridge is implicated in subunit movement. Contacts the P site tRNA; the 5S rRNA and some of its associated proteins might help stabilize positioning of ribosome-bound tRNAs. The polypeptide is Large ribosomal subunit protein uL5 (Parasynechococcus marenigrum (strain WH8102)).